A 94-amino-acid chain; its full sequence is Small ribosomal subunit protein uS19 (94 aa).

Belongs to the universal ribosomal protein uS19 family.

Its function is as follows. Protein S19 forms a complex with S13 that binds strongly to the 16S ribosomal RNA. The chain is Small ribosomal subunit protein uS19 from Wolbachia sp. subsp. Brugia malayi (strain TRS).